The following is a 50-amino-acid chain: uncharacterized protein (50 aa).

Positions 1-22 (MSKVAALGWGTLVYLGVGLLLA) are cleaved as a signal peptide.

This is an uncharacterized protein from Dictyostelium discoideum (Social amoeba).